A 305-amino-acid chain; its full sequence is Glutaminase (305 aa).

Positions 61, 113, 158, 165, 189, 241, and 259 each coordinate substrate.

It belongs to the glutaminase family. Homotetramer.

It carries out the reaction L-glutamine + H2O = L-glutamate + NH4(+). The polypeptide is Glutaminase (Clostridium botulinum (strain 657 / Type Ba4)).